Reading from the N-terminus, the 27-residue chain is C-reactive protein P1 (27 aa).

A disordered region spans residues 1 to 27 (IPQDLSGKMLTFPKEEDDDDVKLMTPK). The Pentraxin (PTX) domain maps to 6 to 27 (SGKMLTFPKEEDDDDVKLMTPK).

The protein belongs to the pentraxin family. In terms of assembly, homopentamer. Pentraxin (or pentaxin) have a discoid arrangement of 5 non-covalently bound subunits. Exists as a dimer under reducing conditions. Ca(2+) is required as a cofactor. Post-translationally, glycosylated.

Its subcellular location is the secreted. In terms of biological role, displays several functions associated with host defense: it promotes agglutination, bacterial capsular swelling, phagocytosis, and complement fixation through its calcium-dependent binding to phosphorylcholine. The protein is C-reactive protein P1 of Gadus morhua (Atlantic cod).